The primary structure comprises 309 residues: Putative taste receptor type 2 member 36 (309 aa).

Met-1 is a topological domain (extracellular). The chain crosses the membrane as a helical span at residues 2-22 (ICFLLIILSILVVFAFVLGNF). The Cytoplasmic segment spans residues 23–46 (SNGFIALVNVIDWVKRQKISSADQ). The chain crosses the membrane as a helical span at residues 47–67 (ILTALVVSRVGLLWVILLHWY). The Extracellular portion of the chain corresponds to 68 to 79 (SNVLNSALYSSE). A helical membrane pass occupies residues 80–100 (VIIFISNAWAIINHFSIWLAT). At 101–126 (SLSIFYLLKIVNFSRLIFHHLKRKAK) the chain is on the cytoplasmic side. A helical transmembrane segment spans residues 127–147 (SVVLVIVLGPLVFLVCHLVMK). The Extracellular segment spans residues 148–181 (HTYINVWTKEYEGNVTWKIKLRNAIHLSNLTVST). N-linked (GlcNAc...) asparagine glycosylation is found at Asn-161 and Asn-176. A helical membrane pass occupies residues 182–202 (LANLIPFTLTLISFLLLIYSL). Topologically, residues 203–229 (CKHLKKMQLHGKGSQDPSTKVHIKALQ) are cytoplasmic. Residues 230 to 250 (TVTSFLLLCAIYFLSMIISVC) form a helical membrane-spanning segment. Residues 251–259 (NFGRLEKQP) are Extracellular-facing. A helical membrane pass occupies residues 260–280 (VFMFCQAIIFSYPSTHPFILI). The Cytoplasmic portion of the chain corresponds to 281 to 309 (LGNKKLKQIFLSVFWQMRYWVKGEKPSSP).

The protein belongs to the G-protein coupled receptor T2R family.

The protein localises to the membrane. Functionally, putative taste receptor which may play a role in the perception of bitterness. This is Putative taste receptor type 2 member 36 from Homo sapiens (Human).